We begin with the raw amino-acid sequence, 620 residues long: Leucine-rich repeat and immunoglobulin-like domain-containing nogo receptor-interacting protein 1 (620 aa).

A signal peptide spans 1–41 (MQVSKRMLAGGVRSMPSPLLACWQPILLLVLGSVLSGSATG). 2 cysteine pairs are disulfide-bonded: C42–C48 and C46–C57. The 30-residue stretch at 42-71 (CPPRCECSAQDRAVLCHRKRFVAVPEGIPT) folds into the LRRNT domain. Topologically, residues 42–561 (CPPRCECSAQ…FDIKTLIIAT (520 aa)) are extracellular. LRR repeat units lie at residues 72–93 (ETRL…EFAS), 96–117 (HLEE…AFNN), 120–141 (NLRT…VFTG), 144–165 (NLTK…MFQD), 168–189 (NLKS…AFSG), 192–213 (SLEQ…ALSH), 216–237 (GLIV…SFKR), 264–285 (NLTS…AVRH), 288–309 (YLRF…MLHE), 312–333 (RLQE…AFRG), and 336–357 (YLRV…VFHS). An N-linked (GlcNAc...) asparagine glycan is attached at N144. N-linked (GlcNAc...) asparagine glycosylation occurs at N202. Residues N264, N274, and N293 are each glycosylated (N-linked (GlcNAc...) asparagine). N341 carries N-linked (GlcNAc...) asparagine glycosylation. Positions 369–423 (NPLACDCRLLWVFRRRWRLNFNRQQPTCATPEFVQGKEFKDFPDVLLPNYFTCRR) constitute an LRRCT domain. 3 disulfide bridges follow: C373-C396, C375-C421, and C446-C497. An Ig-like C2-type domain is found at 411 to 513 (PDVLLPNYFT…GNDSMPAHLH (103 aa)). Residues N492, N505, N526, and N542 are each glycosylated (N-linked (GlcNAc...) asparagine). Residues 562-582 (TMGFISFLGVVLFCLVLLFLW) traverse the membrane as a helical segment. At 583 to 620 (SRGKGNTKHNIEIEYVPRKSDAGISSADAPRKFNMKMI) the chain is on the cytoplasmic side. Residue S602 is modified to Phosphoserine.

Homotetramer. Forms a ternary complex with RTN4R/NGFR and RTN4R/TNFRSF19. Interacts with NGRF and MYT1L. Interacts with RTN4R. In terms of processing, N-glycosylated. Contains predominantly high-mannose glycans. As to expression, expressed exclusively in the central nervous system. Highest level in the in amygdala, hippocampus, thalamus and cerebral cortex. In the rest of the brain a basal expression seems to be always present. Up-regulated in substantia nigra neurons from Parkinson disease patients.

Its subcellular location is the cell membrane. Its function is as follows. Functional component of the Nogo receptor signaling complex (RTN4R/NGFR) in RhoA activation responsible for some inhibition of axonal regeneration by myelin-associated factors. Is also an important negative regulator of oligodentrocyte differentiation and axonal myelination. Acts in conjunction with RTN4 and RTN4R in regulating neuronal precursor cell motility during cortical development. This Homo sapiens (Human) protein is Leucine-rich repeat and immunoglobulin-like domain-containing nogo receptor-interacting protein 1 (LINGO1).